The sequence spans 1374 residues: Alpha,alpha-trehalose-phosphate synthase [UDP-forming] 1 (1374 aa).

Disordered stretches follow at residues 28–66, 86–117, and 1352–1374; these read DTGK…SDKD, YTPG…DDEG, and KADS…SKQQ. Basic and acidic residues-rich tracts occupy residues 56–66 and 86–95; these read DPFDRPKSDKD and YTPGKEKGVD. Composition is skewed to acidic residues over residues 96 to 109 and 1356 to 1368; these read QDES…EDHD and YYDD…DQED.

This sequence in the N-terminal section; belongs to the glycosyltransferase 20 family. The protein in the C-terminal section; belongs to the gob-1 trehalose phosphatase family.

The catalysed reaction is D-glucose 6-phosphate + UDP-alpha-D-glucose = alpha,alpha-trehalose 6-phosphate + UDP + H(+). In terms of biological role, catalyzes the production of trehalose from glucose-6-phosphate and UDP-alpha-D-glucose in a 2 step process. This is Alpha,alpha-trehalose-phosphate synthase [UDP-forming] 1 (tps-1) from Caenorhabditis briggsae.